The following is a 342-amino-acid chain: Sesquiterpene synthase MBR_09977 (342 aa).

Asp91 and Asp96 together coordinate Mg(2+). Residues Asp91–Asp96 carry the DDXXXD motif motif. A substrate-binding site is contributed by Arg184. Asn230, Ser234, and Glu238 together coordinate Mg(2+).

The protein belongs to the terpene synthase family. Mg(2+) serves as cofactor.

The enzyme catalyses (2E,6E)-farnesyl diphosphate + H2O = (+)-corvol ether B + diphosphate. It catalyses the reaction (2E,6E)-farnesyl diphosphate + H2O = (+)-corvol ether A + diphosphate. Its function is as follows. Terpene synthase that catalyzes the conversion of (2E,6E)-farnesyl diphosphate (FPP) into sesquiterpenes which are important for fungi-environment interactions. Produces a mixture consisting of 8 sesquiterpenes including corvol ethers A and B, as well as traces of epizonarene, gamma-cadinene, delta-cadinene, alpha-cadinene, alpha-cadinol, and an unidentified sesquiterpene. The major product is corvol ether A. The polypeptide is Sesquiterpene synthase MBR_09977 (Metarhizium brunneum (strain ARSEF 3297)).